The following is a 346-amino-acid chain: Biotin synthase (346 aa).

A Radical SAM core domain is found at 38–256 (QQVQVSTLLS…IAVARIMMPT (219 aa)). The [4Fe-4S] cluster site is built by Cys53, Cys57, and Cys60. Positions 97, 128, 188, and 260 each coordinate [2Fe-2S] cluster.

It belongs to the radical SAM superfamily. Biotin synthase family. As to quaternary structure, homodimer. [4Fe-4S] cluster is required as a cofactor. The cofactor is [2Fe-2S] cluster.

It carries out the reaction (4R,5S)-dethiobiotin + (sulfur carrier)-SH + 2 reduced [2Fe-2S]-[ferredoxin] + 2 S-adenosyl-L-methionine = (sulfur carrier)-H + biotin + 2 5'-deoxyadenosine + 2 L-methionine + 2 oxidized [2Fe-2S]-[ferredoxin]. It participates in cofactor biosynthesis; biotin biosynthesis; biotin from 7,8-diaminononanoate: step 2/2. Its function is as follows. Catalyzes the conversion of dethiobiotin (DTB) to biotin by the insertion of a sulfur atom into dethiobiotin via a radical-based mechanism. The sequence is that of Biotin synthase from Salmonella dublin (strain CT_02021853).